The sequence spans 245 residues: MPDYSYRPTIGRTYVYDNKYYKNLGSVIKNAKRKKHLLEHQEEEKSLDGLDHYIVAEDPFLGPGKNQKLTLFKEIRNVKPDTMKLIVNWSGKEFLRETWTRFVEDSFPIVNDQEVMDVFLVINLRPTRPNRCYKFLAQHALRWDCDYVPHEVIRIVEPSYVGMNNEYRISLAKKGGGCPIMNIHSEYTNSFESFVNRVIWENFYKPIVYIGTDSGEEEEILIEVSLVFKVKEFAPDAPLFTGPAY.

It belongs to the polyhedrin family.

Functionally, major component of the virus occlusion bodies, which are large proteinaceous structures (polyhedra), that protect the virus from the outside environment for extended periods until they are ingested by insect larvae. In Lepidoptera (butterflies and moths), this protein is Polyhedrin.